A 327-amino-acid polypeptide reads, in one-letter code: uncharacterized protein (327 aa).

In terms of domain architecture, S4 RNA-binding spans 32–105; the sequence is VRLDKWLAEQ…IPLDILYEDE (74 aa). Asp156 is an active-site residue.

This sequence belongs to the pseudouridine synthase RluA family.

It catalyses the reaction a uridine in RNA = a pseudouridine in RNA. This is an uncharacterized protein from Synechocystis sp. (strain ATCC 27184 / PCC 6803 / Kazusa).